A 591-amino-acid polypeptide reads, in one-letter code: NADPH oxidase 1 (591 aa).

Topologically, residues 1 to 36 (MAGELRGSRGPLQRIQIAPREAPNLHLTMGNWLVNH) are cytoplasmic. A helical transmembrane segment spans residues 37-59 (WLSVLFLVSWLGLNIFLFVYAFL). Residues 60–72 (NYEKSDKYYYTRE) are Extracellular-facing. Residues 73-97 (ILGTALALARASALCLNFNSMMILI) form a helical membrane-spanning segment. In terms of domain architecture, Ferric oxidoreductase spans 82–316 (RASALCLNFN…YIFERILRFY (235 aa)). Residues 98-130 (PVCRNLLSFLRGTCSFCNRTLRKPLDHNLTFHK) lie on the Cytoplasmic side of the membrane. 2 residues coordinate heme: His129 and His143. A helical membrane pass occupies residues 131 to 151 (LVAYMICIFTVIHIIAHLFNF). At 152 to 195 (ERYRRSQQAMDGSLASVLSSLSHPEKEDSWLNPIQSPNMTVMYA) the chain is on the extracellular side. A glycan (N-linked (GlcNAc...) asparagine) is linked at Asn189. A helical transmembrane segment spans residues 196 to 216 (AFTSIAGLTGVIATVALVLMV). The Cytoplasmic segment spans residues 217 to 234 (TSAMEFIRRNYFELFWYT). Residues 235–255 (HHLFIVYIICLGIHGLGGIVR) traverse the membrane as a helical segment. The heme site is built by His236 and His248. Residues 256–423 (GQTEESLGES…TVSEDVFQYE (168 aa)) are Extracellular-facing. Residue Asn269 is glycosylated (N-linked (GlcNAc...) asparagine). Residues 317–418 (RSQQKVVITK…DGPFGTVSED (102 aa)) form the FAD-binding FR-type domain. Residue 365-371 (HPFTLTS) participates in FAD binding. Residues 424–444 (VAVLVGAGIGVTPFASILKSI) form a helical membrane-spanning segment. Positions 424-563 (VAVLVGAGIG…GVFLCGPRTL (140 aa)) are interaction with NOXO1. Residues 445–591 (WYKFQRADNK…VQFYFNKETF (147 aa)) are Cytoplasmic-facing. Thr457 is modified (phosphothreonine).

NOX1, NOXA1, NOXO1, RAC1 and CYBA forms a functional multimeric complex supporting ROS production. Interacts with NOXO1. Interacts (via FAD-binding FR-type domain) with ARHGEF7 (via PH domain). Interacts with NOXA1. The cofactor is FAD. Phosphorylation at Thr-457 mediated by PKC/PRKBC positively regulates its interaction with NOXA1 and enzyme activity. In terms of tissue distribution, expressed in colon and vascular smooth muscle cells (VSMC).

It is found in the cell projection. It localises to the invadopodium membrane. Its subcellular location is the cell membrane. It carries out the reaction NADPH + 2 O2 = 2 superoxide + NADP(+) + H(+). With respect to regulation, the oxidase activity is potentiated by NOXA1 and NOXO1. NADPH oxidase that catalyzes the generation of superoxide from molecular oxygen utilizing NADPH as an electron donor. In Mus musculus (Mouse), this protein is NADPH oxidase 1 (Nox1).